Consider the following 477-residue polypeptide: Proton-coupled amino acid transporter 3 (477 aa).

The segment covering 1–13 (MGKTPLLREDGRC) has biased composition (basic and acidic residues). The segment at 1–42 (MGKTPLLREDGRCQRNTFGGSKASSKGSSSSSSNNTVSSKKK) is disordered. The Cytoplasmic segment spans residues 1-54 (MGKTPLLREDGRCQRNTFGGSKASSKGSSSSSSNNTVSSKKKPRRKADALMFIQ). A compositionally biased stretch (low complexity) spans 19–38 (GGSKASSKGSSSSSSNNTVS). Residues 55 to 75 (IFIHLLKSNIGTGFLGLPLAV) form a helical membrane-spanning segment. The Extracellular portion of the chain corresponds to 76-77 (KN). Residues 78 to 98 (AGLLVGPVSLLAIGALTVHCM) form a helical membrane-spanning segment. Residues 99–144 (DILLNCACHLTSRLQRSFVNYEETTMYSLETCPSPWLRTHSVWGRY) lie on the Cytoplasmic side of the membrane. Residues 145-165 (VVSFLLIVTQLGFCSVYFMFM) form a helical membrane-spanning segment. The Extracellular segment spans residues 166–202 (ADNLQQIVEEAHFTSNVCQPRQSLVMTSILDTRFYML). A helical transmembrane segment spans residues 203-223 (TILPFLILLVLVQNPQVLSIF). Residues 224–225 (ST) are Cytoplasmic-facing. Residues 226 to 246 (LATITTLSSLALIFEYLIQIP) form a helical membrane-spanning segment. Topologically, residues 247 to 259 (HHSHLPLVASWKT) are extracellular. The helical transmembrane segment at 260–280 (FLLFFGTAIFTFEGVGMVLPL) threads the bilayer. Over 281 to 291 (KSQMKSPQQFP) the chain is Cytoplasmic. The chain crosses the membrane as a helical span at residues 292–312 (AVLYLGMSFVIFLYICLGTLG). Topologically, residues 313–344 (YMKFGADTQASITLNLPNCWLYQSVKLMYSVG) are extracellular. A helical transmembrane segment spans residues 345–365 (IFFTYALQFHVPAEIIVPYVV). The Cytoplasmic segment spans residues 366 to 374 (SRASENWAL). The helical transmembrane segment at 375 to 395 (FIDLTVRAALVCLTCFSAVLI) threads the bilayer. The Extracellular segment spans residues 396–399 (PRLD). Residues 400–420 (LVISLVGSVSSSALALIIPPL) form a helical membrane-spanning segment. At 421–439 (LEIATFYSENISCTTIAKD) the chain is on the cytoplasmic side. The chain crosses the membrane as a helical span at residues 440–460 (IMISILGLLGCVLGTYQALYE). Residues 461-477 (MTQQSRFPMLNSTNVHT) lie on the Extracellular side of the membrane.

It belongs to the amino acid/polyamine transporter 2 family.

Its subcellular location is the membrane. The polypeptide is Proton-coupled amino acid transporter 3 (Slc36a3) (Rattus norvegicus (Rat)).